The chain runs to 139 residues: Large ribosomal subunit protein uL13 (139 aa).

Belongs to the universal ribosomal protein uL13 family. As to quaternary structure, part of the 50S ribosomal subunit.

Functionally, this protein is one of the early assembly proteins of the 50S ribosomal subunit, although it is not seen to bind rRNA by itself. It is important during the early stages of 50S assembly. The sequence is that of Large ribosomal subunit protein uL13 from Nitratiruptor sp. (strain SB155-2).